A 58-amino-acid chain; its full sequence is Small ribosomal subunit protein bS21 (58 aa).

This sequence belongs to the bacterial ribosomal protein bS21 family.

The sequence is that of Small ribosomal subunit protein bS21 from Picosynechococcus sp. (strain ATCC 27264 / PCC 7002 / PR-6) (Agmenellum quadruplicatum).